The chain runs to 217 residues: Ribosomal RNA small subunit methyltransferase G (217 aa).

S-adenosyl-L-methionine is bound by residues Gly74, Leu79, 125 to 126 (IQ), and Arg143.

The protein belongs to the methyltransferase superfamily. RNA methyltransferase RsmG family.

It is found in the cytoplasm. The catalysed reaction is guanosine(527) in 16S rRNA + S-adenosyl-L-methionine = N(7)-methylguanosine(527) in 16S rRNA + S-adenosyl-L-homocysteine. Functionally, specifically methylates the N7 position of guanine in position 527 of 16S rRNA. This chain is Ribosomal RNA small subunit methyltransferase G, found in Syntrophotalea carbinolica (strain DSM 2380 / NBRC 103641 / GraBd1) (Pelobacter carbinolicus).